Here is an 88-residue protein sequence, read N- to C-terminus: Small integral membrane protein 13 (88 aa).

The chain crosses the membrane as a helical span at residues 10–30 (LVFVATLLIVLLLMVCGWYFV). Over residues 48–61 (TGSQEGDNEQPSGS) the composition is skewed to polar residues. The disordered stretch occupies residues 48–88 (TGSQEGDNEQPSGSETEEDPSASPQKIRSARQRRPPVDAGH). A phosphoserine mark is found at S59 and S61. Position 63 is a phosphothreonine (T63). At S70 the chain carries Phosphoserine.

It belongs to the SMIM13 family.

The protein resides in the membrane. This chain is Small integral membrane protein 13 (Smim13), found in Mus musculus (Mouse).